Consider the following 61-residue polypeptide: Putative protein RenD (61 aa).

In Escherichia coli (strain K12), this protein is Putative protein RenD (renD).